Reading from the N-terminus, the 265-residue chain is Hydroxyethylthiazole kinase (265 aa).

M50 provides a ligand contact to substrate. Positions 125 and 171 each coordinate ATP. G198 lines the substrate pocket.

The protein belongs to the Thz kinase family. It depends on Mg(2+) as a cofactor.

It catalyses the reaction 5-(2-hydroxyethyl)-4-methylthiazole + ATP = 4-methyl-5-(2-phosphooxyethyl)-thiazole + ADP + H(+). The protein operates within cofactor biosynthesis; thiamine diphosphate biosynthesis; 4-methyl-5-(2-phosphoethyl)-thiazole from 5-(2-hydroxyethyl)-4-methylthiazole: step 1/1. In terms of biological role, catalyzes the phosphorylation of the hydroxyl group of 4-methyl-5-beta-hydroxyethylthiazole (THZ). The protein is Hydroxyethylthiazole kinase of Salmonella paratyphi C (strain RKS4594).